We begin with the raw amino-acid sequence, 673 residues long: DNA ligase (673 aa).

Residues 36-40 (DAEYD), 85-86 (SL), and Glu116 each bind NAD(+). Residue Lys118 is the N6-AMP-lysine intermediate of the active site. Residues Arg139, Glu176, Lys291, and Lys315 each contribute to the NAD(+) site. The Zn(2+) site is built by Cys409, Cys412, Cys427, and Cys433. One can recognise a BRCT domain in the interval 592–673 (RGEQPLAGRT…LQALLQEHGR (82 aa)).

Belongs to the NAD-dependent DNA ligase family. LigA subfamily. The cofactor is Mg(2+). Mn(2+) is required as a cofactor.

It catalyses the reaction NAD(+) + (deoxyribonucleotide)n-3'-hydroxyl + 5'-phospho-(deoxyribonucleotide)m = (deoxyribonucleotide)n+m + AMP + beta-nicotinamide D-nucleotide.. DNA ligase that catalyzes the formation of phosphodiester linkages between 5'-phosphoryl and 3'-hydroxyl groups in double-stranded DNA using NAD as a coenzyme and as the energy source for the reaction. It is essential for DNA replication and repair of damaged DNA. The polypeptide is DNA ligase (Alkalilimnicola ehrlichii (strain ATCC BAA-1101 / DSM 17681 / MLHE-1)).